Here is a 791-residue protein sequence, read N- to C-terminus: Phenylalanine--tRNA ligase beta subunit (791 aa).

A tRNA-binding domain is found at 39-147 (GDALGQVVVA…DDAPVGQALA (109 aa)). The region spanning 400–475 (PQPASILLRR…RIHGYDRVPT (76 aa)) is the B5 domain. Residues Asp453, Asp459, Glu462, and Glu463 each coordinate Mg(2+). An FDX-ACB domain is found at 697–790 (SRYPSMRRDL…IEREHRARIR (94 aa)).

This sequence belongs to the phenylalanyl-tRNA synthetase beta subunit family. Type 1 subfamily. In terms of assembly, tetramer of two alpha and two beta subunits. Mg(2+) serves as cofactor.

It is found in the cytoplasm. It carries out the reaction tRNA(Phe) + L-phenylalanine + ATP = L-phenylalanyl-tRNA(Phe) + AMP + diphosphate + H(+). This Xanthomonas campestris pv. campestris (strain 8004) protein is Phenylalanine--tRNA ligase beta subunit.